We begin with the raw amino-acid sequence, 355 residues long: Probable nitronate monooxygenase (355 aa).

FMN-binding positions include Asn-71, Gln-175, Gly-180, Gly-218, and 237–240 (QMGT).

It belongs to the nitronate monooxygenase family. NMO class I subfamily. The cofactor is FMN.

The catalysed reaction is 3 propionate 3-nitronate + 3 O2 + H2O = 3 3-oxopropanoate + 2 nitrate + nitrite + H2O2 + 3 H(+). In terms of biological role, nitronate monooxygenase that uses molecular oxygen to catalyze the oxidative denitrification of alkyl nitronates. Acts on propionate 3-nitronate (P3N), the presumed physiological substrate. Probably functions in the detoxification of P3N, a metabolic poison produced by plants and fungi as a defense mechanism. The sequence is that of Probable nitronate monooxygenase from Staphylococcus aureus (strain JH1).